The sequence spans 144 residues: Protein MIX23 (144 aa).

Alanine 2 carries the post-translational modification N-acetylalanine. Positions 82–120 (VKSLREEREKNLDDLTLLKRLRKEQTKLKWMQSELNVEE) form a coiled coil. Residue lysine 100 is modified to N6-acetyllysine.

Belongs to the MIX23 family.

In Mus musculus (Mouse), this protein is Protein MIX23.